Consider the following 87-residue polypeptide: Cell division topological specificity factor (87 aa).

This sequence belongs to the MinE family.

In terms of biological role, prevents the cell division inhibition by proteins MinC and MinD at internal division sites while permitting inhibition at polar sites. This ensures cell division at the proper site by restricting the formation of a division septum at the midpoint of the long axis of the cell. In Leptothrix cholodnii (strain ATCC 51168 / LMG 8142 / SP-6) (Leptothrix discophora (strain SP-6)), this protein is Cell division topological specificity factor.